The sequence spans 689 residues: Glycine--tRNA ligase beta subunit (689 aa).

The protein belongs to the class-II aminoacyl-tRNA synthetase family. In terms of assembly, tetramer of two alpha and two beta subunits.

The protein resides in the cytoplasm. The catalysed reaction is tRNA(Gly) + glycine + ATP = glycyl-tRNA(Gly) + AMP + diphosphate. This Shewanella sp. (strain W3-18-1) protein is Glycine--tRNA ligase beta subunit.